The chain runs to 759 residues: Catalase-peroxidase (759 aa).

The segment at 1–24 is disordered; sequence MTQDKCPFKEQPSQPNFAGGGTSN. Positions 96–242 form a cross-link, tryptophyl-tyrosyl-methioninium (Trp-Tyr) (with M-268); sequence WHSAGTYRVF…LAAAHMGLIY (147 aa). The active-site Proton acceptor is the His97. Positions 242-268 form a cross-link, tryptophyl-tyrosyl-methioninium (Tyr-Met) (with W-96); the sequence is YVNPEGPDGNPDPIAAAHDIRDTFGRM. His283 is a heme b binding site.

It belongs to the peroxidase family. Peroxidase/catalase subfamily. In terms of assembly, homodimer or homotetramer. Requires heme b as cofactor. Formation of the three residue Trp-Tyr-Met cross-link is important for the catalase, but not the peroxidase activity of the enzyme.

It localises to the cytoplasm. It carries out the reaction H2O2 + AH2 = A + 2 H2O. It catalyses the reaction 2 H2O2 = O2 + 2 H2O. In terms of biological role, bifunctional enzyme with both catalase and broad-spectrum peroxidase activity. In Neosartorya fischeri (strain ATCC 1020 / DSM 3700 / CBS 544.65 / FGSC A1164 / JCM 1740 / NRRL 181 / WB 181) (Aspergillus fischerianus), this protein is Catalase-peroxidase.